Consider the following 174-residue polypeptide: Actin-related protein 2/3 complex subunit 3 (174 aa).

Belongs to the ARPC3 family. In terms of assembly, component of the Arp2/3 complex composed of arpB/Arp2, arpC/Arp3, arcA/p41-arc, arcB/p34-arc, arcC/p21-arc, arcD/p20-arc and arcE/p16-arc. Interacts with carmil (via the region between the LRR domain and COOH-terminal proline-rich domain); carmil is required for Arp2/3-dependent actin nucleation. Arp2/3 complex, MyoB, MyoC, and the alpha and beta subunits of capping protein all form a larger complex with carmil.

The protein resides in the cytoplasm. It localises to the cytoskeleton. It is found in the cytosol. The protein localises to the cell cortex. Its subcellular location is the cell projection. The protein resides in the pseudopodium. Functionally, functions as a component of the Arp2/3 complex which is involved in regulation of actin polymerization and together with an activating nucleation-promoting factor (NPF) mediates the formation of branched actin networks. Seems to contact the pointed end of the daughter actin filament. The Arp2/3 complex is involved in organizing the actin system in cell motility and chemotaxis, in phagocytosis and macropinocytosis, at late steps of endosome processing, and in mitosis. In concert with a group of other proteins, the Arp2/3 complex plays a general role in the rapid activation and adaptation of the actin system to its multiple functions. The polypeptide is Actin-related protein 2/3 complex subunit 3 (arcC) (Dictyostelium discoideum (Social amoeba)).